We begin with the raw amino-acid sequence, 486 residues long: Fructose dehydrogenase cytochrome subunit (486 aa).

The first 25 residues, 1–25 (MRYFRPLSATAMTTVLLLAGTNVRA), serve as a signal peptide directing secretion. 3 Cytochrome c domains span residues 38–142 (PSIS…MTEV), 186–294 (DDWN…RSVP), and 330–423 (TKTT…LSHF). Heme c contacts are provided by Cys-52, Cys-55, His-56, Cys-201, Cys-204, His-205, Cys-343, Cys-346, and His-347. Residues 458-478 (LLGTGGILGAILVVAGLWWLI) form a helical membrane-spanning segment.

In terms of assembly, heterotrimer composed of FdhL, FdhS and FdhC. Post-translationally, binds 3 heme c groups covalently per subunit.

The protein resides in the cell membrane. In terms of biological role, cytochrome subunit of fructose dehydrogenase, an enzyme that catalyzes the oxidation of D-fructose to produce 5-keto-D-fructose. In the complex, mediates both the electron transfer to ubiquinone and the anchoring of the complex to the membrane. The polypeptide is Fructose dehydrogenase cytochrome subunit (fdhC) (Gluconobacter japonicus).